The chain runs to 190 residues: GATA transcription factor 17 (190 aa).

Residues Met-1–Ser-14 show a composition bias toward basic and acidic residues. 2 disordered regions span residues Met-1 to Arg-42 and Arg-77 to Asn-101. A GATA-type zinc finger spans residues Gly-38–Arg-92.

This sequence belongs to the type IV zinc-finger family. Class B subfamily.

The protein resides in the nucleus. Transcriptional regulator that specifically binds 5'-GATA-3' or 5'-GAT-3' motifs within gene promoters. The polypeptide is GATA transcription factor 17 (GATA17) (Arabidopsis thaliana (Mouse-ear cress)).